The sequence spans 131 residues: Ribonuclease VapC4 (131 aa).

The 103-residue stretch at 4–106 (IVPDTNFLIY…IVATNDKELK (103 aa)) folds into the PINc domain. Residues Asp-7 and Asp-102 each contribute to the Mg(2+) site.

This sequence belongs to the PINc/VapC protein family. It depends on Mg(2+) as a cofactor.

Functionally, toxic component of a type II toxin-antitoxin (TA) system. An RNase. Its cognate antitoxin is VapB4. In Methanocaldococcus jannaschii (strain ATCC 43067 / DSM 2661 / JAL-1 / JCM 10045 / NBRC 100440) (Methanococcus jannaschii), this protein is Ribonuclease VapC4.